A 116-amino-acid chain; its full sequence is Protein Wnt-5a (116 aa).

Serine 1 carries the O-palmitoleoyl serine; by PORCN lipid modification. Residues asparagine 69 and asparagine 83 are each glycosylated (N-linked (GlcNAc...) asparagine). Cysteine 82 and cysteine 97 are joined by a disulfide.

The protein belongs to the Wnt family. Palmitoleoylation is required for efficient binding to frizzled receptors. Depalmitoleoylation leads to Wnt signaling pathway inhibition.

The protein localises to the secreted. It localises to the extracellular space. Its subcellular location is the extracellular matrix. Functionally, ligand for members of the frizzled family of seven transmembrane receptors. Can activate or inhibit canonical Wnt signaling, depending on receptor context. Required during embryogenesis for extension of the primary anterior-posterior axis. This is Protein Wnt-5a (WNT5A) from Meleagris gallopavo (Wild turkey).